We begin with the raw amino-acid sequence, 311 residues long: Ribosomal RNA small subunit methyltransferase H (311 aa).

Residues 32 to 34 (AGH), Asp52, Phe79, Asp100, and Gln107 each bind S-adenosyl-L-methionine. Residues 287 to 311 (TASQEELEENNRARSAKLRIAEKRK) are disordered. The span at 300–311 (RSAKLRIAEKRK) shows a compositional bias: basic residues.

It belongs to the methyltransferase superfamily. RsmH family.

It is found in the cytoplasm. It carries out the reaction cytidine(1402) in 16S rRNA + S-adenosyl-L-methionine = N(4)-methylcytidine(1402) in 16S rRNA + S-adenosyl-L-homocysteine + H(+). Specifically methylates the N4 position of cytidine in position 1402 (C1402) of 16S rRNA. The polypeptide is Ribosomal RNA small subunit methyltransferase H (Bacillus subtilis (strain 168)).